Here is a 372-residue protein sequence, read N- to C-terminus: MHC class I-like protein MILL2 (372 aa).

An N-terminal signal peptide occupies residues 1-26; it reads MEASSGTAGPAVLLLILALLLTESQG. The alpha-1 stretch occupies residues 28–119; it reads RSQGTHTLRY…MINQKGHDKG (92 aa). Intrachain disulfides connect Cys78/Cys89, Cys129/Cys191, and Cys230/Cys287. The segment at 120-210 is alpha-2; that stretch reads PYTLQATLDC…SLSNVLPDTG (91 aa). N-linked (GlcNAc...) asparagine glycans are attached at residues Asn134, Asn234, and Asn293. In terms of domain architecture, Ig-like C1-type spans 192-302; the sequence is PARLQRHLAS…NRTIMQTAVS (111 aa). Residues 211-339 form an alpha-3 region; sequence SPVVIVTCRN…VVDGGLVTGN (129 aa). A disordered region spans residues 308 to 349; the sequence is WPSASWATRQEAEGPHRTHNDHVVDGGLVTGNANKDSPDASS. Basic and acidic residues predominate over residues 317–331; it reads QEAEGPHRTHNDHVV. A connecting peptide region spans residues 340 to 348; sequence ANKDSPDAS. Ser349 carries the GPI-anchor amidated serine lipid modification. Residues 350-372 constitute a propeptide, removed in mature form; that stretch reads CATASAISAFPVVVLSVALPRAN.

Belongs to the MHC class I family. Heterodimer with B2M. Ubiquitously expressed in neonatal and adult tissues.

The protein localises to the cell membrane. Binds to heparan sulfate proteoglycans on the surface of fibroblast cells. The sequence is that of MHC class I-like protein MILL2 from Rattus norvegicus (Rat).